We begin with the raw amino-acid sequence, 206 residues long: Small ribosomal subunit protein uS4 (206 aa).

Positions 96–168 (SRLDNVVYRM…LELAEQREKP (73 aa)) constitute an S4 RNA-binding domain.

This sequence belongs to the universal ribosomal protein uS4 family. Part of the 30S ribosomal subunit. Contacts protein S5. The interaction surface between S4 and S5 is involved in control of translational fidelity.

One of the primary rRNA binding proteins, it binds directly to 16S rRNA where it nucleates assembly of the body of the 30S subunit. In terms of biological role, with S5 and S12 plays an important role in translational accuracy. This is Small ribosomal subunit protein uS4 from Baumannia cicadellinicola subsp. Homalodisca coagulata.